A 425-amino-acid polypeptide reads, in one-letter code: Serine--tRNA ligase (425 aa).

Residue 233–235 (TAE) coordinates L-serine. 264 to 266 (RRE) contributes to the ATP binding site. E287 lines the L-serine pocket. 351–354 (EISS) contacts ATP. Residue S387 participates in L-serine binding.

Belongs to the class-II aminoacyl-tRNA synthetase family. Type-1 seryl-tRNA synthetase subfamily. In terms of assembly, homodimer. The tRNA molecule binds across the dimer.

Its subcellular location is the cytoplasm. The catalysed reaction is tRNA(Ser) + L-serine + ATP = L-seryl-tRNA(Ser) + AMP + diphosphate + H(+). It catalyses the reaction tRNA(Sec) + L-serine + ATP = L-seryl-tRNA(Sec) + AMP + diphosphate + H(+). It participates in aminoacyl-tRNA biosynthesis; selenocysteinyl-tRNA(Sec) biosynthesis; L-seryl-tRNA(Sec) from L-serine and tRNA(Sec): step 1/1. In terms of biological role, catalyzes the attachment of serine to tRNA(Ser). Is also able to aminoacylate tRNA(Sec) with serine, to form the misacylated tRNA L-seryl-tRNA(Sec), which will be further converted into selenocysteinyl-tRNA(Sec). The protein is Serine--tRNA ligase of Thermotoga petrophila (strain ATCC BAA-488 / DSM 13995 / JCM 10881 / RKU-1).